A 314-amino-acid chain; its full sequence is 2,3-dihydroxyphenylpropionate/2,3-dihydroxicinnamic acid 1,2-dioxygenase (314 aa).

Catalysis depends on His-115, which acts as the Proton donor. His-179 serves as the catalytic Proton acceptor.

This sequence belongs to the LigB/MhpB extradiol dioxygenase family. As to quaternary structure, homotetramer. It depends on Fe(2+) as a cofactor.

It carries out the reaction 3-(2,3-dihydroxyphenyl)propanoate + O2 = (2Z,4E)-2-hydroxy-6-oxonona-2,4-dienedioate + H(+). The catalysed reaction is (2E)-3-(2,3-dihydroxyphenyl)prop-2-enoate + O2 = (2Z,4E,7E)-2-hydroxy-6-oxonona-2,4,7-trienedioate + H(+). It participates in aromatic compound metabolism; 3-phenylpropanoate degradation. In terms of biological role, catalyzes the non-heme iron(II)-dependent oxidative cleavage of 2,3-dihydroxyphenylpropionic acid and 2,3-dihydroxicinnamic acid into 2-hydroxy-6-ketononadienedioate and 2-hydroxy-6-ketononatrienedioate, respectively. The protein is 2,3-dihydroxyphenylpropionate/2,3-dihydroxicinnamic acid 1,2-dioxygenase of Escherichia coli O139:H28 (strain E24377A / ETEC).